Reading from the N-terminus, the 140-residue chain is Holo-[acyl-carrier-protein] synthase (140 aa).

Residues D8 and E57 each coordinate Mg(2+).

This sequence belongs to the P-Pant transferase superfamily. AcpS family. The cofactor is Mg(2+).

The protein localises to the cytoplasm. It catalyses the reaction apo-[ACP] + CoA = holo-[ACP] + adenosine 3',5'-bisphosphate + H(+). Transfers the 4'-phosphopantetheine moiety from coenzyme A to a Ser of acyl-carrier-protein. In Beijerinckia indica subsp. indica (strain ATCC 9039 / DSM 1715 / NCIMB 8712), this protein is Holo-[acyl-carrier-protein] synthase.